We begin with the raw amino-acid sequence, 174 residues long: Shikimate kinase 2 (174 aa).

ATP is bound at residue Gly-12 to Thr-17. Residues Thr-16 and Asp-32 each coordinate Mg(2+). Substrate contacts are provided by Asp-34, Arg-58, and Gly-79. Positions Met-112–Lys-126 are LID domain. Position 120 (Arg-120) interacts with ATP. Arg-139 contributes to the substrate binding site.

The protein belongs to the shikimate kinase family. AroL subfamily. Monomer. Mg(2+) serves as cofactor.

The protein resides in the cytoplasm. The catalysed reaction is shikimate + ATP = 3-phosphoshikimate + ADP + H(+). Its pathway is metabolic intermediate biosynthesis; chorismate biosynthesis; chorismate from D-erythrose 4-phosphate and phosphoenolpyruvate: step 5/7. Its function is as follows. Catalyzes the specific phosphorylation of the 3-hydroxyl group of shikimic acid using ATP as a cosubstrate. The polypeptide is Shikimate kinase 2 (Photorhabdus laumondii subsp. laumondii (strain DSM 15139 / CIP 105565 / TT01) (Photorhabdus luminescens subsp. laumondii)).